Consider the following 698-residue polypeptide: Protein let-99 (698 aa).

The DEP domain maps to 23 to 107; it reads FRSNLSLKTN…SESRIYLFMK (85 aa). Disordered stretches follow at residues 115–188 and 653–672; these read PKPR…DDEI and ITRS…QASP. Positions 146–157 are enriched in basic residues; that stretch reads RPPKARLPRRLS. Residues 178–188 are compositionally biased toward basic and acidic residues; the sequence is HGFDDHKDDEI.

The protein localises to the cytoplasm. The protein resides in the cell cortex. Functionally, required for the proper orientation of spindles after the establishment of polarity. May play a role in interactions between the astral microtubules and the cortical cytoskeleton. Required for asymmetric forces on nuclei and spindles. Acts downstream of the PAR signaling as an intermediate that transduces polarity information to the machinery that positions the mitotic spindle, possibly by regulating force generation. Regulates gpr-1/2 asymmetric cortical localization during the first embryonic cell divisions. Acts antagonistically to the gpr-1/2 signaling pathway. Regulates mes-1 expression and/or localization pattern during early embryogenesis. This is Protein let-99 (let-99) from Caenorhabditis elegans.